A 499-amino-acid polypeptide reads, in one-letter code: Trichothecene C-4 hydroxylase (499 aa).

A helical membrane pass occupies residues 7–29; that stretch reads VGVAVQLVLTVLLASIPLRVIWN. 2 N-linked (GlcNAc...) asparagine glycosylation sites follow: Asn-173 and Asn-287. Cys-442 contacts heme. N-linked (GlcNAc...) asparagine glycosylation occurs at Asn-473.

The protein belongs to the cytochrome P450 family. Heme serves as cofactor.

It is found in the membrane. It participates in sesquiterpene biosynthesis; trichothecene biosynthesis. Its function is as follows. Trichothecene C-4 hydroxylase; part of the gene cluster that mediates the production of the antimicrobial trichothecene harzianum A (HA) that plays a role in Botrytis cinerea antagonistic activity and plant defense priming. The biosynthesis of harzianum A begins with the cyclization of farnesyl diphosphate to trichodiene and is catalyzed by the trichodiene synthase TRI5. Trichodiene undergoes a series of oxygenations catalyzed by the cytochrome P450 monooxygenase TRI4. TRI4 controls the addition of 3 oxygens at C-2, C-11, and the C-12, C-13-epoxide to form the intermediate isotrichodiol. Isotrichodiol then undergoes a non-enzymatic isomerization and cyclization to form 12,13-epoxytrichothec-9-ene (EPT) which is further converted to trichodermol by the cytochrome P450 monooxygenase TRI11 via C-4 hydroxylation. The last step of HA synthesis is esterification of an octatriendioyl moiety to the C-4 oxygen of trichodermol. The octatriendioyl moiety is probably produced by the polyketide synthase TRI17 and the esterification performed by the trichothecene O-acetyltransferase TRI3. The sequence is that of Trichothecene C-4 hydroxylase from Trichoderma arundinaceum.